Reading from the N-terminus, the 224-residue chain is 7-cyano-7-deazaguanine synthase (224 aa).

ATP is bound at residue 8–18 (CSGGLDSTVAA). The Zn(2+) site is built by Cys-190, Cys-198, Cys-201, and Cys-204.

This sequence belongs to the QueC family. The cofactor is Zn(2+).

It carries out the reaction 7-carboxy-7-deazaguanine + NH4(+) + ATP = 7-cyano-7-deazaguanine + ADP + phosphate + H2O + H(+). It participates in purine metabolism; 7-cyano-7-deazaguanine biosynthesis. In terms of biological role, catalyzes the ATP-dependent conversion of 7-carboxy-7-deazaguanine (CDG) to 7-cyano-7-deazaguanine (preQ(0)). The chain is 7-cyano-7-deazaguanine synthase from Methanothrix thermoacetophila (strain DSM 6194 / JCM 14653 / NBRC 101360 / PT) (Methanosaeta thermophila).